The following is a 549-amino-acid chain: DNA ligase 1 (549 aa).

Position 212 (Glu-212) interacts with ATP. Catalysis depends on Lys-214, which acts as the N6-AMP-lysine intermediate. 6 residues coordinate ATP: Arg-219, Arg-234, Glu-264, Phe-310, Arg-387, and Lys-393.

This sequence belongs to the ATP-dependent DNA ligase family. Requires Mg(2+) as cofactor.

The enzyme catalyses ATP + (deoxyribonucleotide)n-3'-hydroxyl + 5'-phospho-(deoxyribonucleotide)m = (deoxyribonucleotide)n+m + AMP + diphosphate.. In terms of biological role, DNA ligase that seals nicks in double-stranded DNA during DNA replication, DNA recombination and DNA repair. The chain is DNA ligase 1 from Methanosarcina barkeri (strain Fusaro / DSM 804).